The chain runs to 199 residues: Fe/S biogenesis protein NfuA (199 aa).

[4Fe-4S] cluster contacts are provided by cysteine 151 and cysteine 154.

The protein belongs to the NfuA family. In terms of assembly, homodimer. [4Fe-4S] cluster serves as cofactor.

Functionally, involved in iron-sulfur cluster biogenesis. Binds a 4Fe-4S cluster, can transfer this cluster to apoproteins, and thereby intervenes in the maturation of Fe/S proteins. Could also act as a scaffold/chaperone for damaged Fe/S proteins. The polypeptide is Fe/S biogenesis protein NfuA (Xanthomonas euvesicatoria pv. vesicatoria (strain 85-10) (Xanthomonas campestris pv. vesicatoria)).